A 1209-amino-acid chain; its full sequence is Zinc finger protein 804A (1209 aa).

The C2H2-type zinc finger occupies 57–81 (FYCELCDKQYYKHQEFDNHINSYDH). A compositionally biased stretch (basic and acidic residues) spans 380-394 (VKHNEASTTEVENKN). Disordered stretches follow at residues 380 to 401 (VKHNEASTTEVENKNGPETLAP) and 792 to 860 (PEEF…MKPQ). A compositionally biased stretch (basic residues) spans 807–819 (KPKKKRRRKRGRF). Composition is skewed to basic and acidic residues over residues 826-836 (LELKENTDYPV) and 848-860 (LISEDKKEKMKPQ).

The protein is Zinc finger protein 804A (ZNF804A) of Homo sapiens (Human).